The following is a 1133-amino-acid chain: Lysylphosphatidylglycerol biosynthesis bifunctional protein LysX (1133 aa).

Residues 1-626 are phosphatidylglycerol lysyltransferase; sequence MTTVDASPGI…LLHHDGSTPD (626 aa). 7 helical membrane-spanning segments follow: residues 43-63, 82-102, 109-129, 140-160, 177-197, 233-253, and 575-595; these read VPAA…IASV, LFNF…LAAA, IAWL…AVDM, FGEN…VLSY, AVLV…VELF, LNAI…IVLF, and LIPR…LPFS. Positions 627–1133 are lysine--tRNA ligase; sequence VSGLQTADVD…TLPFPLAKPH (507 aa). Asp1045 and Glu1052 together coordinate Mg(2+).

It in the N-terminal section; belongs to the LPG synthetase family. The protein in the C-terminal section; belongs to the class-II aminoacyl-tRNA synthetase family. Requires Mg(2+) as cofactor.

It is found in the cell membrane. It catalyses the reaction tRNA(Lys) + L-lysine + ATP = L-lysyl-tRNA(Lys) + AMP + diphosphate. The enzyme catalyses L-lysyl-tRNA(Lys) + a 1,2-diacyl-sn-glycero-3-phospho-(1'-sn-glycerol) = a 1,2-diacyl-sn-glycero-3-phospho-1'-(3'-O-L-lysyl)-sn-glycerol + tRNA(Lys). In terms of biological role, catalyzes the production of L-lysyl-tRNA(Lys)transfer and the transfer of a lysyl group from L-lysyl-tRNA(Lys) to membrane-bound phosphatidylglycerol (PG), which produces lysylphosphatidylglycerol (LPG), one of the components of the bacterial membrane with a positive net charge. LPG synthesis contributes to the resistance to cationic antimicrobial peptides (CAMPs) and likely protects M.tuberculosis against the CAMPs produced by competiting microorganisms (bacteriocins). In fact, the modification of anionic phosphatidylglycerol with positively charged L-lysine results in repulsion of the peptides. In Mycobacterium leprae (strain Br4923), this protein is Lysylphosphatidylglycerol biosynthesis bifunctional protein LysX (lysX).